The sequence spans 1005 residues: Translocated actin-recruiting phosphoprotein (1005 aa).

Residues 1–10 (MTNSISGYQP) show a composition bias toward polar residues. Disordered regions lie at residues 1-36 (MTNS…SVST), 73-155 (APNV…SNYD), 487-521 (INWG…SPTP), 542-626 (DTNV…DGPA), 671-749 (GSAQ…GPSG), and 792-847 (TGTS…TSLM). 2 stretches are compositionally biased toward low complexity: residues 11–36 (TVTT…SVST) and 73–121 (APNV…SSDH). Polar residues predominate over residues 130 to 154 (GSNSGDISNNYDDVGSNNGDISSNY). Composition is skewed to low complexity over residues 542–578 (DTNV…TDDI), 593–612 (GDIS…VSSS), 720–736 (SSSG…SSES), and 831–846 (STTT…TTSL).

This sequence belongs to the chlamydial CPn_0572/CT_456/TC_0741 family. In terms of processing, phosphorylated on a tyrosine on attachment to the host cell. Tyrosine phosphorylation is temporally and spatially associated with recruitment of actin to the site of chlamydial entry. Phosphorylated Tarp seems to remain cytoplasmically exposed on the inclusion membrane at one side of internalized elementary bodies for several hours after entry.

The protein resides in the secreted. Functionally, appears to initiate or participate in signaling events that regulate the actin recruitment, which ultimately leads to internalization. In Chlamydia trachomatis serovar D (strain ATCC VR-885 / DSM 19411 / UW-3/Cx), this protein is Translocated actin-recruiting phosphoprotein (tarP).